A 312-amino-acid chain; its full sequence is Ribosomal RNA small subunit methyltransferase H (312 aa).

Residues Gly35–His37, Asp54, Phe81, Asp100, and Gln107 each bind S-adenosyl-L-methionine.

This sequence belongs to the methyltransferase superfamily. RsmH family.

It localises to the cytoplasm. The enzyme catalyses cytidine(1402) in 16S rRNA + S-adenosyl-L-methionine = N(4)-methylcytidine(1402) in 16S rRNA + S-adenosyl-L-homocysteine + H(+). Its function is as follows. Specifically methylates the N4 position of cytidine in position 1402 (C1402) of 16S rRNA. The polypeptide is Ribosomal RNA small subunit methyltransferase H (Campylobacter jejuni subsp. jejuni serotype O:2 (strain ATCC 700819 / NCTC 11168)).